The sequence spans 272 residues: Soluble interferon gamma receptor OPG193 (272 aa).

The signal sequence occupies residues 1-13 (MRYIIILAVLFIN). Asparagine 42, asparagine 150, and asparagine 267 each carry an N-linked (GlcNAc...) asparagine; by host glycan.

It belongs to the type II cytokine receptor family. In terms of assembly, homodimer. Interacts with host IFNG.

It localises to the secreted. Counteracts the antiviral effects of host IFN-gamma. Acts as a soluble IFN-gamma receptor and thus inhibits the interaction between host IFN-gamma and its receptor. In Bos taurus (Bovine), this protein is Soluble interferon gamma receptor OPG193 (OPG193).